Consider the following 569-residue polypeptide: Aspartic proteinase 3 (569 aa).

The N-terminal stretch at 1–21 (MKLKTVRSAVLSSLFASQVLG) is a signal peptide. The propeptide occupies 22–67 (KIIPAANKRDDDSNSKFVKLPFHKLYGDSLENVGSDKKPEVRLLKR). Positions 83–475 (YSVDLEVGTP…DLENLEISMA (393 aa)) constitute a Peptidase A1 domain. Asn95 is a glycosylation site (N-linked (GlcNAc...) asparagine). Residue Asp101 is part of the active site. Asn203, Asn232, Asn242, Asn245, Asn299, and Asn358 each carry an N-linked (GlcNAc...) asparagine glycan. Asp371 is an active-site residue. 3 N-linked (GlcNAc...) asparagine glycosylation sites follow: Asn480, Asn522, and Asn532. A lipid anchor (GPI-anchor amidated asparagine) is attached at Asn548. A propeptide spans 549–569 (VGDHIVPSLPLTLISLLFAFI) (removed in mature form).

This sequence belongs to the peptidase A1 family. Consists of an alpha and a beta subunit, which are maintained together by a disulfide bond. Post-translationally, the zymogen is transported to the periplasm, where the propeptide is removed and the enzyme is further subjected to an internal, autocatalytic cleavage to generate an alpha/beta two-subunit endopeptidase. The proteolytic processing at the cell surface is regulated by the environmental pH. Extensively N-glycosylated.

The protein localises to the cell membrane. The catalysed reaction is Hydrolyzes various precursor proteins with Arg or Lys in P1, and commonly Arg or Lys also in P2. The P3 amino acid is usually non-polar, but otherwise additional basic amino acids are favorable in both non-prime and prime positions.. In terms of biological role, cleaves proteins C-terminally to mono- and paired-basic residues. Involved in the shedding of a subset of GPI-anchored plasma membrane proteins from the cell surface, including itself, GAS1 and MSB2. May also play a role in the maturation of GPI-mannoproteins associated with the cell wall. Can process the alpha-mating factor precursor. Required for cell wall integrity. This is Aspartic proteinase 3 (YPS1) from Saccharomyces cerevisiae (strain ATCC 204508 / S288c) (Baker's yeast).